Reading from the N-terminus, the 55-residue chain is ATP synthase F(0) complex subunit 8 (55 aa).

Residues 10–32 traverse the membrane as a helical segment; that stretch reads FFIMLASWLTFSLIIQPKLLTFV.

It belongs to the ATPase protein 8 family. Component of the ATP synthase complex composed at least of ATP5F1A/subunit alpha, ATP5F1B/subunit beta, ATP5MC1/subunit c (homooctomer), MT-ATP6/subunit a, MT-ATP8/subunit 8, ATP5ME/subunit e, ATP5MF/subunit f, ATP5MG/subunit g, ATP5MK/subunit k, ATP5MJ/subunit j, ATP5F1C/subunit gamma, ATP5F1D/subunit delta, ATP5F1E/subunit epsilon, ATP5PF/subunit F6, ATP5PB/subunit b, ATP5PD/subunit d, ATP5PO/subunit OSCP. ATP synthase complex consists of a soluble F(1) head domain (subunits alpha(3) and beta(3)) - the catalytic core - and a membrane F(0) domain - the membrane proton channel (subunits c, a, 8, e, f, g, k and j). These two domains are linked by a central stalk (subunits gamma, delta, and epsilon) rotating inside the F1 region and a stationary peripheral stalk (subunits F6, b, d, and OSCP).

The protein resides in the mitochondrion membrane. Functionally, subunit 8, of the mitochondrial membrane ATP synthase complex (F(1)F(0) ATP synthase or Complex V) that produces ATP from ADP in the presence of a proton gradient across the membrane which is generated by electron transport complexes of the respiratory chain. ATP synthase complex consist of a soluble F(1) head domain - the catalytic core - and a membrane F(1) domain - the membrane proton channel. These two domains are linked by a central stalk rotating inside the F(1) region and a stationary peripheral stalk. During catalysis, ATP synthesis in the catalytic domain of F(1) is coupled via a rotary mechanism of the central stalk subunits to proton translocation. In vivo, can only synthesize ATP although its ATP hydrolase activity can be activated artificially in vitro. Part of the complex F(0) domain. The polypeptide is ATP synthase F(0) complex subunit 8 (Loxigilla noctis (Lesser Antillean bullfinch)).